The primary structure comprises 710 residues: Integrator complex subunit 10 (710 aa).

A phosphoserine mark is found at serine 231, serine 381, and serine 382. A Glycyl lysine isopeptide (Lys-Gly) (interchain with G-Cter in SUMO2) cross-link involves residue lysine 464.

Belongs to the Integrator subunit 10 family. In terms of assembly, component of the Integrator complex, composed of core subunits INTS1, INTS2, INTS3, INTS4, INTS5, INTS6, INTS7, INTS8, INTS9/RC74, INTS10, INTS11/CPSF3L, INTS12, INTS13, INTS14 and INTS15. The core complex associates with protein phosphatase 2A subunits PPP2CA and PPP2R1A, to form the Integrator-PP2A (INTAC) complex. INTS10 is part of the tail subcomplex, composed of INTS10, INTS13, INTS14 and INTS15.

The protein resides in the nucleus. Its function is as follows. Component of the integrator complex, a multiprotein complex that terminates RNA polymerase II (Pol II) transcription in the promoter-proximal region of genes. The integrator complex provides a quality checkpoint during transcription elongation by driving premature transcription termination of transcripts that are unfavorably configured for transcriptional elongation: the complex terminates transcription by (1) catalyzing dephosphorylation of the C-terminal domain (CTD) of Pol II subunit POLR2A/RPB1 and SUPT5H/SPT5, (2) degrading the exiting nascent RNA transcript via endonuclease activity and (3) promoting the release of Pol II from bound DNA. The integrator complex is also involved in terminating the synthesis of non-coding Pol II transcripts, such as enhancer RNAs (eRNAs), small nuclear RNAs (snRNAs), telomerase RNAs and long non-coding RNAs (lncRNAs). Within the integrator complex, INTS10 is part of the integrator tail module that acts as a platform for the recruitment of transcription factors at promoters. May be not involved in the recruitment of cytoplasmic dynein to the nuclear envelope, probably as component of the integrator complex. In Homo sapiens (Human), this protein is Integrator complex subunit 10.